Reading from the N-terminus, the 349-residue chain is Very-long-chain 3-oxoacyl-CoA reductase (349 aa).

The helical transmembrane segment at 29 to 49 (AASLVFATGGLFLLSRGLSFL) threads the bilayer. NADP(+)-binding residues include Leu74, Asp129, Asp137, Asn156, Tyr223, Lys227, Val256, and Ser258. Catalysis depends on Tyr223, which acts as the Proton donor. Lys227 serves as the catalytic Lowers pKa of active site Tyr.

It belongs to the short-chain dehydrogenases/reductases (SDR) family.

Its subcellular location is the endoplasmic reticulum membrane. The enzyme catalyses a very-long-chain (3R)-3-hydroxyacyl-CoA + NADP(+) = a very-long-chain 3-oxoacyl-CoA + NADPH + H(+). It functions in the pathway lipid metabolism; fatty acid biosynthesis. In terms of biological role, component of the microsomal membrane bound fatty acid elongation system, which produces the 26-carbon very long-chain fatty acids (VLCFA) from palmitate. Catalyzes the reduction of the 3-ketoacyl-CoA intermediate that is formed in each cycle of fatty acid elongation. VLCFAs serve as precursors for ceramide and sphingolipids. The sequence is that of Very-long-chain 3-oxoacyl-CoA reductase from Coccidioides immitis (strain RS) (Valley fever fungus).